Consider the following 115-residue polypeptide: Thionin-like protein 2 (115 aa).

The signal sequence occupies residues 1–20 (MLVAVMIVMVIGNLLAQTAA).

The protein belongs to the plant thionin (TC 1.C.44) family. In terms of processing, is disulfide-linked.

The protein localises to the secreted. Its function is as follows. May be involved in plant defense. This Arabidopsis thaliana (Mouse-ear cress) protein is Thionin-like protein 2.